The sequence spans 299 residues: Ribosomal protein L11 methyltransferase (299 aa).

S-adenosyl-L-methionine contacts are provided by Thr-139, Gly-166, Asp-188, and Asn-231.

The protein belongs to the methyltransferase superfamily. PrmA family.

It localises to the cytoplasm. The catalysed reaction is L-lysyl-[protein] + 3 S-adenosyl-L-methionine = N(6),N(6),N(6)-trimethyl-L-lysyl-[protein] + 3 S-adenosyl-L-homocysteine + 3 H(+). Functionally, methylates ribosomal protein L11. The protein is Ribosomal protein L11 methyltransferase of Thermosynechococcus vestitus (strain NIES-2133 / IAM M-273 / BP-1).